We begin with the raw amino-acid sequence, 461 residues long: Peptidyl-prolyl cis-trans isomerase-like 4 (461 aa).

The PPIase cyclophilin-type domain maps to 1–171; sequence MSVLLETSLG…KDIRIRHTVI (171 aa). The region spanning 248–326 is the RRM domain; that stretch reads NVLFVCKLNP…HRIHVDFSQS (79 aa). A disordered region spans residues 372–461; the sequence is NYNMVFDKND…DDRYRDRRRR (90 aa). Composition is skewed to basic and acidic residues over residues 378-392 and 400-461; these read DKND…ERSY and NYRD…RRRR.

It belongs to the cyclophilin-type PPIase family. PPIL4 subfamily.

It is found in the nucleus. It catalyses the reaction [protein]-peptidylproline (omega=180) = [protein]-peptidylproline (omega=0). Functionally, PPIases accelerate the folding of proteins. It catalyzes the cis-trans isomerization of proline imidic peptide bonds in oligopeptides. This Emericella nidulans (strain FGSC A4 / ATCC 38163 / CBS 112.46 / NRRL 194 / M139) (Aspergillus nidulans) protein is Peptidyl-prolyl cis-trans isomerase-like 4 (cyp6).